Here is a 793-residue protein sequence, read N- to C-terminus: Sucrose synthase (793 aa).

Residues 259–738 (MILNIAIISP…AIKRVTEKYS (480 aa)) are GT-B glycosyltransferase.

It belongs to the glycosyltransferase 1 family. Homotetramer.

It carries out the reaction an NDP-alpha-D-glucose + D-fructose = a ribonucleoside 5'-diphosphate + sucrose + H(+). Its function is as follows. Catalyzes the reversible conversion of sucrose and a nucleotide disphosphate (NDP) into fructose and NDP-glucose; although the reaction is freely reversible in vitro, the physiological reaction seems to be sucrose cleavage. Unlike characterized plant enzymes prefers ADP as a cosubstrate, whereas plants prefer UDP. Its preference for ADP over UDP suggests it may directly link sucrose and glycogen metabolism. The chain is Sucrose synthase from Melioribacter roseus (strain JCM 17771 / P3M-2).